The chain runs to 26 residues: Turripeptide OL49 (26 aa).

Post-translationally, contains 3 disulfide bonds. Expressed by the venom duct.

Its subcellular location is the secreted. Its function is as follows. Acts as a neurotoxin by inhibiting an ion channel. This Iotyrris olangoensis (Sea snail) protein is Turripeptide OL49.